Consider the following 204-residue polypeptide: Urease accessory protein UreG (204 aa).

Residue G15 to T22 participates in GTP binding.

It belongs to the SIMIBI class G3E GTPase family. UreG subfamily. In terms of assembly, homodimer. UreD, UreF and UreG form a complex that acts as a GTP-hydrolysis-dependent molecular chaperone, activating the urease apoprotein by helping to assemble the nickel containing metallocenter of UreC. The UreE protein probably delivers the nickel.

Its subcellular location is the cytoplasm. In terms of biological role, facilitates the functional incorporation of the urease nickel metallocenter. This process requires GTP hydrolysis, probably effectuated by UreG. In Methylobacterium nodulans (strain LMG 21967 / CNCM I-2342 / ORS 2060), this protein is Urease accessory protein UreG.